The sequence spans 304 residues: UTP--glucose-1-phosphate uridylyltransferase 1 (304 aa).

It belongs to the UDPGP type 2 family.

It carries out the reaction alpha-D-glucose 1-phosphate + UTP + H(+) = UDP-alpha-D-glucose + diphosphate. The protein operates within carbohydrate metabolism; nucleotide-sugar metabolism. This is UTP--glucose-1-phosphate uridylyltransferase 1 (hasC1) from Streptococcus pyogenes serotype M18 (strain MGAS8232).